The primary structure comprises 134 residues: uncharacterized protein (134 aa).

An N-terminal signal peptide occupies residues 1-37 (MSYIKRDHTALRDIAMKTFLKVVGLAASLSAASVAFS).

This is an uncharacterized protein from Coxiella burnetii (strain RSA 493 / Nine Mile phase I).